The primary structure comprises 204 residues: Imidazole glycerol phosphate synthase subunit HisH 1 (204 aa).

Residues 5–204 (KVVIIDTGCA…AKLIQNFLEL (200 aa)) enclose the Glutamine amidotransferase type-1 domain. Cys80 acts as the Nucleophile in catalysis. Active-site residues include His186 and Glu188.

In terms of assembly, heterodimer of HisH and HisF.

The protein resides in the cytoplasm. The enzyme catalyses 5-[(5-phospho-1-deoxy-D-ribulos-1-ylimino)methylamino]-1-(5-phospho-beta-D-ribosyl)imidazole-4-carboxamide + L-glutamine = D-erythro-1-(imidazol-4-yl)glycerol 3-phosphate + 5-amino-1-(5-phospho-beta-D-ribosyl)imidazole-4-carboxamide + L-glutamate + H(+). It catalyses the reaction L-glutamine + H2O = L-glutamate + NH4(+). Its pathway is amino-acid biosynthesis; L-histidine biosynthesis; L-histidine from 5-phospho-alpha-D-ribose 1-diphosphate: step 5/9. IGPS catalyzes the conversion of PRFAR and glutamine to IGP, AICAR and glutamate. The HisH subunit provides the glutamine amidotransferase activity that produces the ammonia necessary to HisF for the synthesis of IGP and AICAR. This Vibrio vulnificus (strain YJ016) protein is Imidazole glycerol phosphate synthase subunit HisH 1 (hisH1).